A 234-amino-acid chain; its full sequence is Urease accessory protein UreG 1 (234 aa).

The tract at residues methionine 1 to proline 29 is disordered. Glycine 42–threonine 49 lines the GTP pocket.

It belongs to the SIMIBI class G3E GTPase family. UreG subfamily. As to quaternary structure, homodimer. UreD, UreF and UreG form a complex that acts as a GTP-hydrolysis-dependent molecular chaperone, activating the urease apoprotein by helping to assemble the nickel containing metallocenter of UreC. The UreE protein probably delivers the nickel.

It localises to the cytoplasm. Its function is as follows. Facilitates the functional incorporation of the urease nickel metallocenter. This process requires GTP hydrolysis, probably effectuated by UreG. This is Urease accessory protein UreG 1 from Streptomyces griseus subsp. griseus (strain JCM 4626 / CBS 651.72 / NBRC 13350 / KCC S-0626 / ISP 5235).